The following is a 409-amino-acid chain: Glutamyl-tRNA reductase (409 aa).

Substrate is bound by residues 46–49 (TCNR), Ser-88, 93–95 (ENE), and Gln-99. Cys-47 serves as the catalytic Nucleophile. Position 164-169 (164-169 (GNGMIA)) interacts with NADP(+).

Belongs to the glutamyl-tRNA reductase family. Homodimer.

It catalyses the reaction (S)-4-amino-5-oxopentanoate + tRNA(Glu) + NADP(+) = L-glutamyl-tRNA(Glu) + NADPH + H(+). Its pathway is porphyrin-containing compound metabolism; protoporphyrin-IX biosynthesis; 5-aminolevulinate from L-glutamyl-tRNA(Glu): step 1/2. In terms of biological role, catalyzes the NADPH-dependent reduction of glutamyl-tRNA(Glu) to glutamate 1-semialdehyde (GSA). This Thermoplasma acidophilum (strain ATCC 25905 / DSM 1728 / JCM 9062 / NBRC 15155 / AMRC-C165) protein is Glutamyl-tRNA reductase.